The following is a 220-amino-acid chain: Claudin-6 (220 aa).

Residues 1–7 (MASAGMQ) lie on the Cytoplasmic side of the membrane. Residues 8-28 (ILGVVLTLLGWVNGLVSCALP) form a helical membrane-spanning segment. Topologically, residues 29–81 (MWKVTAFIGNSIVVAQVVWEGLWMSCVVQSTGQMQCKVYDSLLALPQDLQAAR) are extracellular. The helical transmembrane segment at 82 to 102 (ALCVIALLVALFGLLVYLAGA) threads the bilayer. The Cytoplasmic segment spans residues 103 to 116 (KCTTCVEEKDSKAR). Residues 117–137 (LVLTSGIVFVISGVLTLIPVC) traverse the membrane as a helical segment. Over 138–160 (WTAHAIIRDFYNPLVAEAQKREL) the chain is Extracellular. Residues 161-181 (GASLYLGWAASGLLLLGGGLL) form a helical membrane-spanning segment. Residues 182-220 (CCTCPSGGSQGPSHYMARYSTSAPAISRGPSEYPTKNYV) lie on the Cytoplasmic side of the membrane. 4 positions are modified to phosphoserine: serine 201, serine 203, serine 208, and serine 212. The tract at residues 219–220 (YV) is interactions with TJP1, TJP2 and TJP3.

This sequence belongs to the claudin family. Directly interacts with TJP1/ZO-1, TJP2/ZO-2 and TJP3/ZO-3. Interacts with CLDN1, CD81 and OCLN. In terms of tissue distribution, expressed in the liver, in peripheral blood mononuclear cells and hepatocarcinoma cell lines.

The protein localises to the cell junction. The protein resides in the tight junction. Its subcellular location is the cell membrane. In terms of biological role, plays a major role in tight junction-specific obliteration of the intercellular space. (Microbial infection) Acts as a receptor for hepatitis C virus (HCV) entry into hepatic cells. The protein is Claudin-6 (CLDN6) of Homo sapiens (Human).